Consider the following 224-residue polypeptide: UPF0173 metal-dependent hydrolase STH3160 (224 aa).

The protein belongs to the UPF0173 family.

This Symbiobacterium thermophilum (strain DSM 24528 / JCM 14929 / IAM 14863 / T) protein is UPF0173 metal-dependent hydrolase STH3160.